Reading from the N-terminus, the 537-residue chain is Bifunctional NAD(P)H-hydrate repair enzyme Nnr (537 aa).

Positions 1 to 227 are NAD(P)H-hydrate epimerase; that stretch reads MLGRPVFGLG…PPEAEVYVGP (227 aa). The region spanning 13–223 is the YjeF N-terminal domain; that stretch reads ITSVDVAVID…SIGAPPEAEV (211 aa). The segment at 65-69 is NADPHX 1; for epimerase activity; sequence GNGGD. The K(+) site is built by Asn66 and Asp135. The tract at residues 139-145 is NADPHX 1; for epimerase activity; that stretch reads GTGLRGA. (6S)-NADPHX contacts are provided by Tyr150 and Asp168. Residue Ser171 coordinates K(+). The YjeF C-terminal domain maps to 226–508; it reads GPGDVAYRVR…EKIPEALNNP (283 aa). The tract at residues 227–537 is ADP-dependent (S)-NAD(P)H-hydrate dehydratase; that stretch reads PGDVAYRVRP…WQPPVGRSES (311 aa). Gly329 is a binding site for (6S)-NADPHX. The segment at 381-387 is NADPHX 2; for dehydratase activity; it reads HQREFQI. Residues 421–425 and 440–449 contribute to the ADP site; these read KGPID and VPAMSVGGTG. Position 450 (Asp450) interacts with (6S)-NADPHX.

This sequence in the N-terminal section; belongs to the NnrE/AIBP family. In the C-terminal section; belongs to the NnrD/CARKD family. Requires K(+) as cofactor.

It catalyses the reaction (6S)-NADHX + ADP = AMP + phosphate + NADH + H(+). It carries out the reaction (6S)-NADPHX + ADP = AMP + phosphate + NADPH + H(+). The enzyme catalyses (6R)-NADHX = (6S)-NADHX. The catalysed reaction is (6R)-NADPHX = (6S)-NADPHX. In terms of biological role, bifunctional enzyme that catalyzes the epimerization of the S- and R-forms of NAD(P)HX and the dehydration of the S-form of NAD(P)HX at the expense of ADP, which is converted to AMP. This allows the repair of both epimers of NAD(P)HX, a damaged form of NAD(P)H that is a result of enzymatic or heat-dependent hydration. The polypeptide is Bifunctional NAD(P)H-hydrate repair enzyme Nnr (nnr) (Hyperthermus butylicus (strain DSM 5456 / JCM 9403 / PLM1-5)).